The primary structure comprises 306 residues: Dirigent protein 24 (306 aa).

An N-terminal signal peptide occupies residues 1–21; the sequence is MAKALSLTIFLFLLIASNVQS. The segment at 36-61 is disordered; sequence PQVPEEEDDSPQAVTTTPTPIPLPGP.

This sequence belongs to the plant dirigent protein family. In terms of assembly, homodimer.

It is found in the secreted. The protein resides in the extracellular space. Its subcellular location is the apoplast. In terms of biological role, dirigent proteins impart stereoselectivity on the phenoxy radical-coupling reaction, yielding optically active lignans from two molecules of coniferyl alcohol in the biosynthesis of lignans, flavonolignans, and alkaloids and thus plays a central role in plant secondary metabolism. In Arabidopsis thaliana (Mouse-ear cress), this protein is Dirigent protein 24 (DIR24).